The primary structure comprises 300 residues: Fluorinase (300 aa).

S-adenosyl-L-methionine-binding positions include Asp-16, Asp-21–Ser-23, Tyr-77, Ser-158, Asp-211, Asn-216, Ser-270–Arg-271, and Arg-278–Ala-280.

The protein belongs to the SAM hydrolase / SAM-dependent halogenase family. Homohexamer.

It catalyses the reaction fluoride + S-adenosyl-L-methionine = 5'-deoxy-5'-fluoroadenosine + L-methionine. The enzyme catalyses chloride + S-adenosyl-L-methionine = 5'-chloro-5'-deoxyadenosine + L-methionine. With respect to regulation, activity is severely inhibited by 1 mM Cu(2+) or Zn(2+). Catalyzes the formation of a C-F bond by combining S-adenosyl-L-methionine (SAM) and fluoride to generate 5'-fluoro-5'-deoxyadenosine (5'-FDA) and L-methionine. Probably involved in fluoroacetate (FAc) and 4-fluorothreonine (4-FT) biosynthesis. In vitro, can also catalyze the conversion of chloride and SAM to 5'-chloro-5'-deoxyadenosine (5'-CIDA) and L-methionine in the presence of L-amino acid oxidase. The chain is Fluorinase from Nocardia brasiliensis (strain ATCC 700358 / HUJEG-1).